A 128-amino-acid chain; its full sequence is MIKVFLLIIGGAIGSALRFGVSTWMQRSMLYSFPFGILSVNVIGSFLIGFCWSIAEAYNFSINTRAFLFTGLFGGFTTFSSFALDTMVLMRTGEYKMALLNVLASNILGLIAVFLGIILGKNIITMIK.

4 consecutive transmembrane segments (helical) span residues 4-24 (VFLL…VSTW), 35-55 (FGIL…WSIA), 67-87 (FLFT…LDTM), and 99-119 (LLNV…GIIL). Positions 74 and 77 each coordinate Na(+).

This sequence belongs to the fluoride channel Fluc/FEX (TC 1.A.43) family.

The protein localises to the cell inner membrane. The catalysed reaction is fluoride(in) = fluoride(out). Its activity is regulated as follows. Na(+) is not transported, but it plays an essential structural role and its presence is essential for fluoride channel function. Functionally, fluoride-specific ion channel. Important for reducing fluoride concentration in the cell, thus reducing its toxicity. This chain is Fluoride-specific ion channel FluC, found in Parabacteroides distasonis (strain ATCC 8503 / DSM 20701 / CIP 104284 / JCM 5825 / NCTC 11152).